We begin with the raw amino-acid sequence, 156 residues long: Biotin carboxyl carrier protein of acetyl-CoA carboxylase (156 aa).

Residues Pro-73 to Glu-156 form the Biotinyl-binding domain. Position 122 is an N6-biotinyllysine (Lys-122).

As to quaternary structure, homodimer.

It participates in lipid metabolism; fatty acid biosynthesis. Its function is as follows. This protein is a component of the acetyl coenzyme A carboxylase complex; first, biotin carboxylase catalyzes the carboxylation of the carrier protein and then the transcarboxylase transfers the carboxyl group to form malonyl-CoA. In Escherichia coli O6:H1 (strain CFT073 / ATCC 700928 / UPEC), this protein is Biotin carboxyl carrier protein of acetyl-CoA carboxylase (accB).